Reading from the N-terminus, the 467-residue chain is Citrate synthase, mitochondrial (467 aa).

Active-site residues include His301 and His347.

This sequence belongs to the citrate synthase family.

The protein localises to the mitochondrion matrix. The enzyme catalyses oxaloacetate + acetyl-CoA + H2O = citrate + CoA + H(+). It functions in the pathway carbohydrate metabolism; tricarboxylic acid cycle; isocitrate from oxaloacetate: step 1/2. The polypeptide is Citrate synthase, mitochondrial (CIT) (Candida tropicalis (Yeast)).